The primary structure comprises 232 residues: NAD(P)H-quinone oxidoreductase subunit K 1 (232 aa).

[4Fe-4S] cluster-binding residues include Cys-49, Cys-50, Cys-114, and Cys-145.

This sequence belongs to the complex I 20 kDa subunit family. In terms of assembly, NDH-1 can be composed of about 15 different subunits; different subcomplexes with different compositions have been identified which probably have different functions. The cofactor is [4Fe-4S] cluster.

It is found in the cellular thylakoid membrane. The catalysed reaction is a plastoquinone + NADH + (n+1) H(+)(in) = a plastoquinol + NAD(+) + n H(+)(out). It catalyses the reaction a plastoquinone + NADPH + (n+1) H(+)(in) = a plastoquinol + NADP(+) + n H(+)(out). In terms of biological role, NDH-1 shuttles electrons from an unknown electron donor, via FMN and iron-sulfur (Fe-S) centers, to quinones in the respiratory and/or the photosynthetic chain. The immediate electron acceptor for the enzyme in this species is believed to be plastoquinone. Couples the redox reaction to proton translocation, and thus conserves the redox energy in a proton gradient. Cyanobacterial NDH-1 also plays a role in inorganic carbon-concentration. This chain is NAD(P)H-quinone oxidoreductase subunit K 1, found in Acaryochloris marina (strain MBIC 11017).